The sequence spans 341 residues: Calcium-binding protein 39 (341 aa).

Belongs to the Mo25 family. As to quaternary structure, component of a trimeric complex composed of STK11/LKB1, STRAD (STRADA or STRADB) and CAB39/MO25 (CAB39/MO25alpha or CAB39L/MO25beta): the complex tethers STK11/LKB1 in the cytoplasm and stimulates its catalytic activity.

It localises to the cytoplasm. In terms of biological role, component of a complex that binds and activates STK11/LKB1. In the complex, required to stabilize the interaction between CAB39/MO25 (CAB39/MO25alpha or CAB39L/MO25beta) and STK11/LKB1. The sequence is that of Calcium-binding protein 39 (CAB39) from Bos taurus (Bovine).